The primary structure comprises 715 residues: Ribosomal RNA large subunit methyltransferase K/L (715 aa).

A THUMP domain is found at 47–158; that stretch reads LGYKISLWTR…RDNVTIFLDF (112 aa).

The protein belongs to the methyltransferase superfamily. RlmKL family.

It is found in the cytoplasm. The catalysed reaction is guanosine(2445) in 23S rRNA + S-adenosyl-L-methionine = N(2)-methylguanosine(2445) in 23S rRNA + S-adenosyl-L-homocysteine + H(+). The enzyme catalyses guanosine(2069) in 23S rRNA + S-adenosyl-L-methionine = N(2)-methylguanosine(2069) in 23S rRNA + S-adenosyl-L-homocysteine + H(+). Functionally, specifically methylates the guanine in position 2445 (m2G2445) and the guanine in position 2069 (m7G2069) of 23S rRNA. The polypeptide is Ribosomal RNA large subunit methyltransferase K/L (Colwellia psychrerythraea (strain 34H / ATCC BAA-681) (Vibrio psychroerythus)).